A 108-amino-acid polypeptide reads, in one-letter code: uncharacterized protein (108 aa).

The signal sequence occupies residues 1-22; that stretch reads MMIKQCVICLSLLVFGTTAAHA.

This is an uncharacterized protein from Bacillus subtilis (strain 168).